A 595-amino-acid chain; its full sequence is Sorting nexin-9 (595 aa).

An SH3 domain is found at 1-62 (MATKARVMYD…PTDYVEILPN (62 aa)). The span at 89-100 (QTNSSSANSNNQ) shows a compositional bias: low complexity. Residues 89 to 199 (QTNSSSANSN…QRGNSRAGAS (111 aa)) are disordered. Residue Ser121 is modified to Phosphoserine. The span at 129–144 (TDGTSAQRNSSANNWD) shows a compositional bias: polar residues. A compositionally biased stretch (acidic residues) spans 159–169 (GDDDEWDEDWD). Ser200 carries the phosphoserine modification. The segment at 201–213 (MKLPLNKFPGFAK) is critical for tubulation activity. At Tyr239 the chain carries Phosphotyrosine. Positions 250–360 (FDCVVADPRK…QQFLNFRDEK (111 aa)) constitute a PX domain. Arg286, Lys288, and Arg327 together coordinate a 1,2-diacyl-sn-glycero-3-phospho-(1D-myo-inositol-4,5-bisphosphate). Lys288 bears the N6-acetyllysine mark. The BAR domain occupies 392–595 (LIEIEQKCDA…RQALSRFPVM (204 aa)).

It belongs to the sorting nexin family. Homodimer, and homooligomer. Heterodimer with SNX18. Interacts with ITCH. Interacts (via SH3 domain) with TNK2, WASL and ACTR3. Identified in a complex with TNK2 and clathrin heavy chains. Identified in a complex with the AP-2 complex, clathrin and DNM2. Interacts (via SH3 domain) with DNM1 and DNM2. Identified in an oligomeric complex containing DNM1 and SNX9. Interacts with FCHSD1. Interacts with ADAM9 and ADAM15 cytoplasmic tails. Phosphorylated on tyrosine residues by TNK2. Phosphorylation promotes its activity in the degradation of EGFR. Post-translationally, ubiquitinated by ITCH. In terms of tissue distribution, detected in inner ear vestibula and in the cuticular plate of cochlear hair cells (at protein level).

It is found in the cytoplasmic vesicle membrane. The protein resides in the cell membrane. It localises to the cytoplasmic vesicle. Its subcellular location is the clathrin-coated vesicle. The protein localises to the golgi apparatus. It is found in the trans-Golgi network. The protein resides in the cell projection. It localises to the ruffle. Its subcellular location is the cytoplasm. Involved in endocytosis and intracellular vesicle trafficking, both during interphase and at the end of mitosis. Required for efficient progress through mitosis and cytokinesis. Required for normal formation of the cleavage furrow at the end of mitosis. Plays a role in endocytosis via clathrin-coated pits, but also clathrin-independent, actin-dependent fluid-phase endocytosis. Plays a role in macropinocytosis. Promotes internalization of TNFR. Promotes degradation of EGFR after EGF signaling. Stimulates the GTPase activity of DNM1. Promotes DNM1 oligomerization. Promotes activation of the Arp2/3 complex by WASL, and thereby plays a role in the reorganization of the F-actin cytoskeleton. Binds to membranes enriched in phosphatidylinositol 4,5-bisphosphate and promotes membrane tubulation. Has lower affinity for membranes enriched in phosphatidylinositol 3-phosphate. This chain is Sorting nexin-9 (Snx9), found in Mus musculus (Mouse).